We begin with the raw amino-acid sequence, 301 residues long: Glycine--tRNA ligase alpha subunit (301 aa).

Belongs to the class-II aminoacyl-tRNA synthetase family. As to quaternary structure, tetramer of two alpha and two beta subunits.

Its subcellular location is the cytoplasm. It catalyses the reaction tRNA(Gly) + glycine + ATP = glycyl-tRNA(Gly) + AMP + diphosphate. In Actinobacillus pleuropneumoniae serotype 5b (strain L20), this protein is Glycine--tRNA ligase alpha subunit.